Reading from the N-terminus, the 145-residue chain is Small ribosomal subunit protein uS12 (145 aa).

This sequence belongs to the universal ribosomal protein uS12 family. In terms of assembly, component of the small ribosomal subunit. Mature ribosomes consist of a small (40S) and a large (60S) subunit. The 40S subunit contains about 32 different proteins and 1 molecule of RNA (18S). The 60S subunit contains 45 different proteins and 3 molecules of RNA (25S, 5.8S and 5S).

It is found in the cytoplasm. Its function is as follows. Component of the ribosome, a large ribonucleoprotein complex responsible for the synthesis of proteins in the cell. The small ribosomal subunit (SSU) binds messenger RNAs (mRNAs) and translates the encoded message by selecting cognate aminoacyl-transfer RNA (tRNA) molecules. The large subunit (LSU) contains the ribosomal catalytic site termed the peptidyl transferase center (PTC), which catalyzes the formation of peptide bonds, thereby polymerizing the amino acids delivered by tRNAs into a polypeptide chain. The nascent polypeptides leave the ribosome through a tunnel in the LSU and interact with protein factors that function in enzymatic processing, targeting, and the membrane insertion of nascent chains at the exit of the ribosomal tunnel. In Candida albicans (strain SC5314 / ATCC MYA-2876) (Yeast), this protein is Small ribosomal subunit protein uS12 (RPS23A).